We begin with the raw amino-acid sequence, 419 residues long: L-rhamnose isomerase (419 aa).

Residues His262, Asp294, and Asp296 each coordinate Mn(2+).

Belongs to the rhamnose isomerase family. Homotetramer. It depends on Mn(2+) as a cofactor.

Its subcellular location is the cytoplasm. It carries out the reaction L-rhamnopyranose = L-rhamnulose. It functions in the pathway carbohydrate degradation; L-rhamnose degradation; glycerone phosphate from L-rhamnose: step 1/3. Its function is as follows. Catalyzes the interconversion of L-rhamnose and L-rhamnulose. This Escherichia coli O127:H6 (strain E2348/69 / EPEC) protein is L-rhamnose isomerase.